The sequence spans 233 residues: MREEAMKKQGVLVAPSIMGADLACIGREARNIEESGADLIHIDVMDGHFVPNITFGPGVVAAINRSTELFLEVHAMIYTPFEFVEAFVKAGADRIIVHFEAAENIKEIISYIQKCGVQAGVAFSPETSIEFVTSFIPLCDVILLMSVHPGFCGQKFIPDTIERIQFVKQAIQVLGREGSCLIEVDGGIDKESARACREAGADILVAASYFFEKDSINMKEKVLLLQGEEHGAK.

Position 16 (Ser-16) interacts with substrate. Residues His-41, Asp-43, and His-74 each contribute to the a divalent metal cation site. The active-site Proton acceptor is the Asp-43. Substrate contacts are provided by residues His-74, 150–153, 185–187, and 207–208; these read GFCG, DGG, and AS. Residue Asp-185 participates in a divalent metal cation binding. Residue Asp-185 is the Proton donor of the active site.

It belongs to the ribulose-phosphate 3-epimerase family. It depends on a divalent metal cation as a cofactor.

It catalyses the reaction D-ribulose 5-phosphate = D-xylulose 5-phosphate. It functions in the pathway carbohydrate degradation. Its function is as follows. Catalyzes the reversible epimerization of D-ribulose 5-phosphate to D-xylulose 5-phosphate. This chain is Ribulose-phosphate 3-epimerase, found in Chlamydia trachomatis serovar D (strain ATCC VR-885 / DSM 19411 / UW-3/Cx).